The chain runs to 146 residues: MLLQGTHRIGRMAMLLALADENESPVLSIPKGWKYCTGKVGSMNSQKVVAAMETAAKSNRVIETDVYRETHALYHAIMEALYGVTRGQIQLADVLRTVGLRFAIVRGTPYDGKKEGEWVAVALYGTIGAPVKGSEHEAIGLGINHI.

Belongs to the HutP family. Homohexamer.

Functionally, antiterminator that binds to cis-acting regulatory sequences on the mRNA in the presence of histidine, thereby suppressing transcription termination and activating the hut operon for histidine utilization. In Bacillus mycoides (strain KBAB4) (Bacillus weihenstephanensis), this protein is Hut operon positive regulatory protein.